The primary structure comprises 1628 residues: Centrosomal protein of 170 kDa protein B (1628 aa).

Positions 23–73 (IFVGREDCELMLQSRSVDKQHAVINYDSDKDEHRVKDLGSLNGTFVNDVRI) constitute an FHA domain. Disordered regions lie at residues 136 to 201 (EHGA…DMTQ), 329 to 369 (LIRR…SEDP), 415 to 504 (PRKK…GKNY), 566 to 586 (SDVR…DAGT), 637 to 659 (LASE…KLSN), 719 to 739 (EHQG…LPQL), 758 to 842 (ESQR…KKST), 1005 to 1084 (VSLV…LDFT), 1100 to 1341 (TVSS…EDEQ), 1379 to 1405 (AGDG…TPAS), 1443 to 1463 (GSTG…DPSK), and 1560 to 1628 (HLDV…TYIV). Basic and acidic residues-rich tracts occupy residues 147 to 156 (KQDKADKKAT) and 180 to 201 (KLDK…DMTQ). Residues 421-434 (QSFTHNANSPQNDT) are compositionally biased toward polar residues. Positions 436 to 453 (PVLKAKAEKRKGTLHVEK) are enriched in basic and acidic residues. Residues 454–479 (VSTNGMGSTAPASKSLSSPSFPQRSN) are compositionally biased toward polar residues. The span at 481–490 (FRREKTEDRI) shows a compositional bias: basic and acidic residues. Basic and acidic residues-rich tracts occupy residues 758-773 (ESQR…RISE) and 817-828 (WKGEESHSREPS). Residues 1005–1023 (VSLVSDKNVPSHSQKNRIV) show a composition bias toward polar residues. A compositionally biased stretch (basic and acidic residues) spans 1045-1056 (ARERLSEKRRTV). Over residues 1129-1150 (RSSNAQKVQQALTRSNSLSTPR) the composition is skewed to polar residues. Low complexity predominate over residues 1176–1193 (SNISPGTSSANSSSAKSS). The segment covering 1216 to 1227 (NVPSDSETTSSV) has biased composition (polar residues). 3 stretches are compositionally biased toward low complexity: residues 1261-1280 (TQKQ…SSST), 1312-1328 (ASTA…SRRQ), and 1381-1398 (DGDS…SISS). Over residues 1564–1596 (PSSNKKTSSTILTSNPLSRTTNNSAARTESQTP) the composition is skewed to polar residues. A compositionally biased stretch (low complexity) spans 1606–1618 (SSSSSSRSPGSSF).

The protein belongs to the CEP170 family.

The protein resides in the cytoplasm. It is found in the cytoskeleton. In terms of biological role, plays a role in microtubule organization. The chain is Centrosomal protein of 170 kDa protein B (cep170b) from Xenopus tropicalis (Western clawed frog).